The sequence spans 972 residues: Multiple C2 domain and transmembrane region protein 8 (972 aa).

The 107-residue stretch at 1 to 107 (MMSNLKLGVE…PYSEAVGLPY (107 aa)) folds into the C2 1 domain. The tract at residues 142-203 (PNLISTKKIP…MMESSLYQAP (62 aa)) is disordered. Basic residues predominate over residues 150–159 (IPSKSRHKFH). Polar residues predominate over residues 161–173 (IPTNESNHSPRGN). A compositionally biased stretch (pro residues) spans 179–194 (PQPPPPQSQTALPPPM). 3 C2 domains span residues 232–352 (GGGK…PEWY), 384–507 (ALNA…NRWF), and 543–669 (YSSD…SHSY). Ca(2+) contacts are provided by aspartate 265, aspartate 271, aspartate 318, aspartate 320, and aspartate 325. A run of 2 helical transmembrane segments spans residues 803–823 (IIFL…SLCL) and 924–944 (TVVL…LYIM).

Belongs to the MCTP family. The cofactor is Ca(2+). As to expression, expressed in root hairs.

The protein resides in the membrane. It is found in the vesicle. In terms of biological role, may function as a signaling molecule by regulating the trafficking of other regulators. In Arabidopsis thaliana (Mouse-ear cress), this protein is Multiple C2 domain and transmembrane region protein 8.